The sequence spans 396 residues: Protein NDRG1-A (396 aa).

Residues 326 to 396 (RSRTGSAASS…NSPKSMEVSC (71 aa)) are disordered. Over residues 327-340 (SRTGSAASSSSQDG) the composition is skewed to low complexity. Repeat copies occupy residues 340 to 349 (GNRSRSHTNE), 350 to 359 (GSRSRSHTGD), 360 to 369 (GNRSRAHTGD), and 370 to 379 (GNRSRSHTDT). The interval 340–379 (GNRSRSHTNEGSRSRSHTGDGNRSRAHTGDGNRSRSHTDT) is 4 X 10 AA tandem repeats of G-[NS]-R-S-R-[AS]-H-T-[DGN]-[DET]. Over residues 346–377 (HTNEGSRSRSHTGDGNRSRAHTGDGNRSRSHT) the composition is skewed to basic and acidic residues. Polar residues predominate over residues 378–390 (DTNNINSDQNSPK).

The protein belongs to the NDRG family.

May be involved in pronephros development, after specification of the pronephros. This Xenopus laevis (African clawed frog) protein is Protein NDRG1-A (ndrg1-a).